The chain runs to 252 residues: MKQKVLIAALFLVAYLGFLLVKLPATLVVRHLPLPPNLVQLEGVSGTLWSGQVARLQYASESLTQLRWELNGWSLLRFAPEVSLRFGDRSGLNGQGVVGWNGAAFGRDITLNVPAPWVLDRVPMRLPFPLTVAGQLQLKVDQFAQGNPWCDNLYGNLHWYGADADTPAGKLPLGDPELKLTCIDSRLVAELKQGSEAVQVLGKLELQPNRQYLFQGTLKPGPELPDQMKQGLPFLGQPDGQGRFPLRYQGRI.

Topologically, residues 1–4 (MKQK) are cytoplasmic. A helical membrane pass occupies residues 5-25 (VLIAALFLVAYLGFLLVKLPA). The Periplasmic portion of the chain corresponds to 26–252 (TLVVRHLPLP…RFPLRYQGRI (227 aa)).

It belongs to the GSP N family.

The protein resides in the cell inner membrane. In terms of biological role, involved in a type II secretion system (T2SS, formerly general secretion pathway, GSP) for the export of proteins. The chain is Type II secretion system protein N (exeN) from Aeromonas hydrophila.